A 455-amino-acid polypeptide reads, in one-letter code: Mycosin-4 (455 aa).

The signal sequence occupies residues 1–25; it reads MTTSRTLRLLVVSALATLSGLGTPV. In terms of domain architecture, Peptidase S8 spans 74–384; the sequence is SAQLADLDQV…NGTVDALAAV (311 aa). Residues D98, H129, and S329 each act as charge relay system in the active site. Positions 389–417 are disordered; sequence IPQAGTATSDPAPVAVPVPRRSTPGPSDR. Low complexity predominate over residues 394–412; it reads TATSDPAPVAVPVPRRSTP. A helical transmembrane segment spans residues 432-452; sequence LALMATLATASRRLRPGRNGI.

Belongs to the peptidase S8 family.

It is found in the cell membrane. In Mycobacterium tuberculosis (strain ATCC 25618 / H37Rv), this protein is Mycosin-4.